A 274-amino-acid chain; its full sequence is MQNITQSWFVQGMIKATTDAWLKGWDERNGGNLTLRLDDADIAPYHDNFHQQPRYIPLSQPMPLLANTPFIVTGSGKFFRNVQLDPAANLGIVKVDSDGAGYHILWGLTNEAVPTSELPAHFLSHCERIKATNGKDRVIMHCHATNLIALTYVLENDTAVFTRQLWEGSTECLVVFPDGVGILPWMVPGTDEIGQATAQEMQKHSLVLWPFHGVFGSGPTLDETFGLIDTAEKSAQVLVKVYSMGGMKQTISREELIALGKRFGVTPLASALAL.

E117 is a catalytic residue. Residues H141, H143, and H212 each contribute to the Zn(2+) site.

The protein belongs to the aldolase class II family. RhaD subfamily. In terms of assembly, homotetramer. Zn(2+) is required as a cofactor.

The protein resides in the cytoplasm. It carries out the reaction L-rhamnulose 1-phosphate = (S)-lactaldehyde + dihydroxyacetone phosphate. The protein operates within carbohydrate degradation; L-rhamnose degradation; glycerone phosphate from L-rhamnose: step 3/3. Its function is as follows. Catalyzes the reversible cleavage of L-rhamnulose-1-phosphate to dihydroxyacetone phosphate (DHAP) and L-lactaldehyde. The chain is Rhamnulose-1-phosphate aldolase from Escherichia coli (strain K12 / MC4100 / BW2952).